We begin with the raw amino-acid sequence, 300 residues long: Bifunctional protein FolD 2 (300 aa).

NADP(+) contacts are provided by residues 165-167, S190, and I231; that span reads GRS.

The protein belongs to the tetrahydrofolate dehydrogenase/cyclohydrolase family. In terms of assembly, homodimer.

It carries out the reaction (6R)-5,10-methylene-5,6,7,8-tetrahydrofolate + NADP(+) = (6R)-5,10-methenyltetrahydrofolate + NADPH. It catalyses the reaction (6R)-5,10-methenyltetrahydrofolate + H2O = (6R)-10-formyltetrahydrofolate + H(+). It participates in one-carbon metabolism; tetrahydrofolate interconversion. In terms of biological role, catalyzes the oxidation of 5,10-methylenetetrahydrofolate to 5,10-methenyltetrahydrofolate and then the hydrolysis of 5,10-methenyltetrahydrofolate to 10-formyltetrahydrofolate. This Pseudomonas savastanoi pv. phaseolicola (strain 1448A / Race 6) (Pseudomonas syringae pv. phaseolicola (strain 1448A / Race 6)) protein is Bifunctional protein FolD 2.